A 275-amino-acid chain; its full sequence is NH(3)-dependent NAD(+) synthetase (275 aa).

Glycine 50 to serine 57 is a binding site for ATP. Position 56 (aspartate 56) interacts with Mg(2+). Residue arginine 147 coordinates deamido-NAD(+). Threonine 167 lines the ATP pocket. Glutamate 172 is a Mg(2+) binding site. Positions 180 and 187 each coordinate deamido-NAD(+). Residues lysine 196 and threonine 218 each coordinate ATP. Histidine 267–lysine 268 contacts deamido-NAD(+).

Belongs to the NAD synthetase family. As to quaternary structure, homodimer.

It catalyses the reaction deamido-NAD(+) + NH4(+) + ATP = AMP + diphosphate + NAD(+) + H(+). Its pathway is cofactor biosynthesis; NAD(+) biosynthesis; NAD(+) from deamido-NAD(+) (ammonia route): step 1/1. Its function is as follows. Catalyzes the ATP-dependent amidation of deamido-NAD to form NAD. Uses ammonia as a nitrogen source. This Pseudomonas savastanoi pv. phaseolicola (strain 1448A / Race 6) (Pseudomonas syringae pv. phaseolicola (strain 1448A / Race 6)) protein is NH(3)-dependent NAD(+) synthetase.